We begin with the raw amino-acid sequence, 160 residues long: Putative 4-hydroxy-4-methyl-2-oxoglutarate aldolase (160 aa).

Substrate-binding positions include 78–81 (GDVI) and R100. A divalent metal cation is bound at residue D101.

It belongs to the class II aldolase/RraA-like family. In terms of assembly, homotrimer. The cofactor is a divalent metal cation.

The enzyme catalyses 4-hydroxy-4-methyl-2-oxoglutarate = 2 pyruvate. The catalysed reaction is oxaloacetate + H(+) = pyruvate + CO2. In terms of biological role, catalyzes the aldol cleavage of 4-hydroxy-4-methyl-2-oxoglutarate (HMG) into 2 molecules of pyruvate. Also contains a secondary oxaloacetate (OAA) decarboxylase activity due to the common pyruvate enolate transition state formed following C-C bond cleavage in the retro-aldol and decarboxylation reactions. The chain is Putative 4-hydroxy-4-methyl-2-oxoglutarate aldolase from Mycolicibacterium paratuberculosis (strain ATCC BAA-968 / K-10) (Mycobacterium paratuberculosis).